We begin with the raw amino-acid sequence, 324 residues long: MKPLSARQQQVLQATVHHYVDTMEPVGSRTLVQRFGIPASSATVRSAMGALEKRGLLTQPHTSAGRIPSALGYRCYVDDLLPEPGVAVQHLERELTGLSLRWAALDDLLQQLARRLTDFTGLMSLITRPQQPRAQLEAIRLVQSGDRLLVMLVEDSGRASHLNLRLPPGASDELTAIERWTDQQLEDGSINWRSLPPQLQRSGDVLRSALDHPSMSPETPLVVHGLSRLVAEPEFHSTAELRPLLELIDDQPCAVVSATDQPGVWIGEEHPQKALQACSVVQAPYRCGQEGVGQVALVGPMRMAYATAHAAVQRVARHLDLLLN.

It belongs to the HrcA family.

Its function is as follows. Negative regulator of class I heat shock genes (grpE-dnaK-dnaJ and groELS operons). Prevents heat-shock induction of these operons. In Parasynechococcus marenigrum (strain WH8102), this protein is Heat-inducible transcription repressor HrcA.